The primary structure comprises 414 residues: MAMPLSLLIGLRFSRGRRRGGMVSLISVISTIGIALGVAVLIVGLSAMNGFERELNNRILAVVPHGEIEAVDQPWTNWQEALDHVQKVPGIAAAAPYINFTGLVESGANLRAIQVKGVNPQQEQRLSALPSFVQGDAWRNFKAGEQQIIIGKGVADALKVKQGDWVSIMIPNSNPEHKLMQPKRVRLHVAGILQLSGQLDHSFAMIPLADAQQYLDMGSSVSGIALKMTDVFNANKLVRDAGEVTNSYVYIKSWIGTYGYMYRDIQMIRAIMYLAMVLVIGVACFNIVSTLVMAVKDKSGDIAVLRTLGAKDGLIRAIFVWYGLLAGLFGSLCGVIIGVVVSLQLTPIIEWIEKLIGHQFLSSDIYFIDFLPSELHWLDVFYVLVTALLLSLLASWYPARRASNIDPARVLSGQ.

The next 4 membrane-spanning stretches (helical) occupy residues 25–45 (LISV…IVGL), 275–295 (AMVL…VMAV), 317–337 (AIFV…GVII), and 377–397 (WLDV…ASWY).

The protein belongs to the ABC-4 integral membrane protein family. LolC/E subfamily.

It localises to the cell inner membrane. Its function is as follows. Part of an ATP-dependent transport system LolCDE responsible for the release of lipoproteins targeted to the outer membrane from the inner membrane. Such a release is dependent of the sorting-signal (absence of an Asp at position 2 of the mature lipoprotein) and of LolA. This Escherichia coli (strain K12) protein is Lipoprotein-releasing system transmembrane protein LolE (lolE).